The sequence spans 307 residues: MRELVLNCREAQADALSDALLEAGVLSVSVEDADLGTEAERPLFGEPGTEPQVQAWERNCVVALLPDGADPAQILEQAIAAAGLDPALAHGWSLREVPDADWVRLTQSQFGPIPISERLWIVPSWHRDDPAVPGLVPDAARDAIHIELDPGLAFGTGSHPTTHLCLAWLEAELPAGARLLDYGCGSGILAIAARKLGAGETVAVDIDPQAVQSTVDNAEVNQVRLQAMLPDALPAGEFQVVVANILSNPLKVLAPMLAGRVAPGGHLVLSGVLERQADEVAAAYAPWLTMSVWRERDGWVCLHGVKA.

Residues Thr-162, Gly-183, Asp-205, and Asn-244 each coordinate S-adenosyl-L-methionine.

It belongs to the methyltransferase superfamily. PrmA family.

The protein localises to the cytoplasm. It catalyses the reaction L-lysyl-[protein] + 3 S-adenosyl-L-methionine = N(6),N(6),N(6)-trimethyl-L-lysyl-[protein] + 3 S-adenosyl-L-homocysteine + 3 H(+). Functionally, methylates ribosomal protein L11. The protein is Ribosomal protein L11 methyltransferase of Bordetella bronchiseptica (strain ATCC BAA-588 / NCTC 13252 / RB50) (Alcaligenes bronchisepticus).